A 314-amino-acid chain; its full sequence is Serine protease 46 (314 aa).

Positions 44 to 281 (VVNGKAVEVG…FTQWIKRQIG (238 aa)) constitute a Peptidase S1 domain. C69 and C85 are disulfide-bonded. Residues H84 and D130 each act as charge relay system in the active site. Disulfide bonds link C164-C239, C197-C219, and C229-C257. S233 (charge relay system) is an active-site residue. Residues 293–313 (FLSPFILTGYILLVSLGSLWL) traverse the membrane as a helical segment.

This sequence belongs to the peptidase S1 family.

The protein resides in the membrane. The polypeptide is Serine protease 46 (Prss46) (Mus musculus (Mouse)).